The primary structure comprises 544 residues: Serine/threonine-protein kinase bur1 (544 aa).

The 302-residue stretch at 25-326 (FEFLGKLGEG…AIDALKHPYF (302 aa)) folds into the Protein kinase domain. ATP-binding positions include 31-39 (LGEGTFGEV) and lysine 54. Aspartate 155 functions as the Proton acceptor in the catalytic mechanism. Residues 357–544 (AAMPPAPAGG…ERVDRGPYRR (188 aa)) form a disordered region. Over residues 374-403 (GGWSTNSGSRTGAETRNPRISSAARSQGNQ) the composition is skewed to polar residues. Composition is skewed to basic and acidic residues over residues 419 to 438 (RGNE…HRDG), 456 to 466 (HSDKTGRDRGY), 488 to 511 (DRNR…DKSH), and 532 to 544 (NYRE…PYRR).

This sequence belongs to the protein kinase superfamily. CMGC Ser/Thr protein kinase family. CDC2/CDKX subfamily.

It localises to the nucleus. The catalysed reaction is L-seryl-[protein] + ATP = O-phospho-L-seryl-[protein] + ADP + H(+). It catalyses the reaction L-threonyl-[protein] + ATP = O-phospho-L-threonyl-[protein] + ADP + H(+). It carries out the reaction [DNA-directed RNA polymerase] + ATP = phospho-[DNA-directed RNA polymerase] + ADP + H(+). Functionally, serine/threonine-protein kinase involved in transcription regulation. Phosphorylates the UBC2/RAD6 ubiquitin-conjugating enzyme (E2), leading to monoubiquitination of histone H2B and the silencing of telomeric-associated genes. Also required for histone H3 methylation. Necessary for the recovery from pheromone-induced growth arrest in the cell cycle G1 phase. In Emericella nidulans (strain FGSC A4 / ATCC 38163 / CBS 112.46 / NRRL 194 / M139) (Aspergillus nidulans), this protein is Serine/threonine-protein kinase bur1 (ptkA).